The primary structure comprises 291 residues: START domain-containing protein 10 (291 aa).

Residue M1 is modified to N-acetylmethionine. The tract at residues 1–23 is disordered; it reads MEKPAASTEPQGSRPALGRESVQ. Positions 14-224 constitute an START domain; it reads RPALGRESVQ…MYKACIKYPE (211 aa). 3 positions are modified to N6-succinyllysine: K94, K197, and K202. Phosphoserine occurs at positions 253, 259, 284, and 289. The disordered stretch occupies residues 260–291; that stretch reads LENIDESAVTESREERAGGAGGEGSDDDTSLT.

Post-translationally, phosphorylation at Ser-284 by CK2 negatively regulates lipid transfer activity, possibly by decreasing membrane association. Testis, kidney, liver, and intestine with the highest level in the testis.

Its subcellular location is the cell projection. The protein resides in the cilium. The protein localises to the flagellum. It localises to the cytoplasm. It is found in the membrane. Phospholipid transfer protein that preferentially selects lipid species containing a palmitoyl or stearoyl chain on the sn-1 and an unsaturated fatty acyl chain (18:1 or 18:2) on the sn-2 position. Able to transfer phosphatidylcholine (PC) and phosphatidyetanolamline (PE) between membranes. May play metabolic roles in sperm maturation or fertilization. This is START domain-containing protein 10 (Stard10) from Mus musculus (Mouse).